A 492-amino-acid chain; its full sequence is GDP-Man:Man(3)GlcNAc(2)-PP-Dol alpha-1,2-mannosyltransferase (492 aa).

The Lumenal portion of the chain corresponds to 1 to 19; that stretch reads MAAGERSWCLCKLLRFFYS. The chain crosses the membrane as a helical span at residues 20–40; sequence LFFPGLIVCGTLCVCLVIVLW. Residues 41–233 lie on the Cytoplasmic side of the membrane; that stretch reads GIRLLLQRKK…TRNPFLSKVK (193 aa). Residues 234–254 constitute an intramembrane region (helical); that stretch reads LIYYYLFAFIYGLVGSCSDVV. Residues 255–399 lie on the Cytoplasmic side of the membrane; sequence MVNSSWTLNH…IGLHTMWNEH (145 aa). The helical intramembrane region spans 400–420; sequence FGIGVVECMAAGTIILAHNSG. The Cytoplasmic portion of the chain corresponds to 421–492; sequence GPKLDIVVPH…FLSSVEKLFK (72 aa).

The protein belongs to the glycosyltransferase group 1 family. Glycosyltransferase 4 subfamily.

It localises to the endoplasmic reticulum membrane. The catalysed reaction is an alpha-D-Man-(1-&gt;3)-[alpha-D-Man-(1-&gt;6)]-beta-D-Man-(1-&gt;4)-beta-D-GlcNAc-(1-&gt;4)-alpha-D-GlcNAc-diphospho-di-trans,poly-cis-dolichol + 2 GDP-alpha-D-mannose = an alpha-D-Man-(1-&gt;2)-alpha-D-Man-(1-&gt;2)-alpha-D-Man-(1-&gt;3)-[alpha-D-Man-(1-&gt;6)]-beta-D-Man-(1-&gt;4)-beta-D-GlcNAc-(1-&gt;4)-alpha-D-GlcNAc-diphospho-di-trans,poly-cis-dolichol + 2 GDP + 2 H(+). The protein operates within protein modification; protein glycosylation. GDP-Man:Man(3)GlcNAc(2)-PP-Dol alpha-1,2-mannosyltransferase that operates in the biosynthetic pathway of dolichol-linked oligosaccharides, the glycan precursors employed in protein asparagine (N)-glycosylation. The assembly of dolichol-linked oligosaccharides begins on the cytosolic side of the endoplasmic reticulum membrane and finishes in its lumen. The sequential addition of sugars to dolichol pyrophosphate produces dolichol-linked oligosaccharides containing fourteen sugars, including two GlcNAcs, nine mannoses and three glucoses. Once assembled, the oligosaccharide is transferred from the lipid to nascent proteins by oligosaccharyltransferases. Catalyzes, on the cytoplasmic face of the endoplasmic reticulum, the addition of the fourth and fifth mannose residues to the dolichol-linked oligosaccharide chain, to produce Man(5)GlcNAc(2)-PP-dolichol core oligosaccharide. Man(5)GlcNAc(2)-PP-dolichol is a substrate for ALG3, the following enzyme in the biosynthetic pathway. In Homo sapiens (Human), this protein is GDP-Man:Man(3)GlcNAc(2)-PP-Dol alpha-1,2-mannosyltransferase.